The following is a 426-amino-acid chain: Serine--tRNA ligase (426 aa).

228 to 230 (TSE) serves as a coordination point for L-serine. Residues 259 to 261 (RRE) and Val-275 each bind ATP. An L-serine-binding site is contributed by Glu-282. 346–349 (ELTS) contributes to the ATP binding site. Thr-386 lines the L-serine pocket.

This sequence belongs to the class-II aminoacyl-tRNA synthetase family. Type-1 seryl-tRNA synthetase subfamily. Homodimer. The tRNA molecule binds across the dimer.

Its subcellular location is the cytoplasm. The catalysed reaction is tRNA(Ser) + L-serine + ATP = L-seryl-tRNA(Ser) + AMP + diphosphate + H(+). It carries out the reaction tRNA(Sec) + L-serine + ATP = L-seryl-tRNA(Sec) + AMP + diphosphate + H(+). It participates in aminoacyl-tRNA biosynthesis; selenocysteinyl-tRNA(Sec) biosynthesis; L-seryl-tRNA(Sec) from L-serine and tRNA(Sec): step 1/1. Functionally, catalyzes the attachment of serine to tRNA(Ser). Is also able to aminoacylate tRNA(Sec) with serine, to form the misacylated tRNA L-seryl-tRNA(Sec), which will be further converted into selenocysteinyl-tRNA(Sec). The protein is Serine--tRNA ligase of Arthrobacter sp. (strain FB24).